The sequence spans 49 residues: uncharacterized protein (49 aa).

A helical membrane pass occupies residues 31–48 (PDLYTIIVSYFSIFSLFF).

The protein resides in the membrane. This is an uncharacterized protein from Saccharomyces cerevisiae (strain ATCC 204508 / S288c) (Baker's yeast).